Reading from the N-terminus, the 838-residue chain is Ribonuclease Z (838 aa).

Ser824 bears the Phosphoserine mark.

Belongs to the RNase Z family. As to quaternary structure, homodimer. Zn(2+) is required as a cofactor.

The protein localises to the cytoplasm. The protein resides in the nucleus. The catalysed reaction is Endonucleolytic cleavage of RNA, removing extra 3' nucleotides from tRNA precursor, generating 3' termini of tRNAs. A 3'-hydroxy group is left at the tRNA terminus and a 5'-phosphoryl group is left at the trailer molecule.. Its function is as follows. Zinc phosphodiesterase, which displays some tRNA 3'-processing endonuclease activity. Probably involved in tRNA maturation, by removing a 3'-trailer from precursor tRNA. This chain is Ribonuclease Z (TRZ1), found in Saccharomyces cerevisiae (strain ATCC 204508 / S288c) (Baker's yeast).